A 205-amino-acid chain; its full sequence is Penta-EF hand domain-containing protein 2 (205 aa).

EF-hand domains lie at 45 to 75 (EMQS…GGTP), 76 to 111 (LGIE…INNL), and 119 to 141 (DRNF…SGFQ). Ca(2+) contacts are provided by aspartate 54, asparagine 56, serine 58, threonine 60, glutamate 65, aspartate 89, asparagine 91, asparagine 93, glutamine 95, and glutamate 100.

This sequence belongs to the Peflin/Sorcin family. In contrast to pefA, does not form homodimers in presence of Ca(2+). May form heterodimers with pefA.

The protein resides in the cytoplasm. The protein localises to the membrane. The polypeptide is Penta-EF hand domain-containing protein 2 (pefB) (Dictyostelium discoideum (Social amoeba)).